Reading from the N-terminus, the 238-residue chain is Thymidine kinase, cytosolic (238 aa).

Position 2 is an N-acetylserine (Ser-2). Ser-2 and Ser-13 each carry phosphoserine. ATP-binding positions include 26-33 (GPMFSGKS), 58-60 (DTR), and 97-100 (DEGQ). The active-site Proton acceptor is the Glu-98. Phe-128 serves as a coordination point for substrate. Zn(2+) contacts are provided by Cys-153 and Cys-156. Residues 172–176 (VEVIG) and Tyr-181 each bind substrate. Positions 185 and 188 each coordinate Zn(2+). A KEN box motif is present at residues 206–208 (KEN). A Phosphoserine modification is found at Ser-235.

This sequence belongs to the thymidine kinase family. In terms of assembly, homotetramer. Tetramerization from dimerization is induced by ATP and increases catalytic efficiency due to a high affinity for thymidine. Tetramerization is inhibited by phosphorylation at Ser-13. Interacts (via the KEN box) with FZR1. Phosphorylated on Ser-13 in mitosis. Phosphorylation of Ser-13 by CDK1 during mitosis reduces homotetramerization and catalytic efficiency when DNA replication is complete and intracellular TK1 is still present at a high level. Post-translationally, polyubiquitinated. Postmitosis, ubiquitination leads to proteasomal degradation. The KEN box sequence located at the C-terminal region targets for degradation by the anaphase promoting complex (APC/C) activated and rate-limited by FZR1.

It is found in the cytoplasm. The catalysed reaction is thymidine + ATP = dTMP + ADP + H(+). Cell-cycle-regulated enzyme of importance in nucleotide metabolism. Catalyzes the first enzymatic step in the salvage pathway converting thymidine into thymidine monophosphate. Transcriptional regulation limits expression to the S phase of the cell cycle and transient expression coincides with the oscillation in the intracellular dTTP concentration. In Bos taurus (Bovine), this protein is Thymidine kinase, cytosolic (TK1).